Consider the following 100-residue polypeptide: NADH-quinone oxidoreductase subunit K (100 aa).

The next 3 membrane-spanning stretches (helical) occupy residues 2–22 (VTLNHYLILSSLLFMIGLVGV), 28–48 (LLMLFFSTEIMLNAVNVGLVA), and 63–83 (FFIIAVAASEVAVGLGLLILW).

This sequence belongs to the complex I subunit 4L family. In terms of assembly, NDH-1 is composed of 14 different subunits. Subunits NuoA, H, J, K, L, M, N constitute the membrane sector of the complex.

It localises to the cell inner membrane. It carries out the reaction a quinone + NADH + 5 H(+)(in) = a quinol + NAD(+) + 4 H(+)(out). Functionally, NDH-1 shuttles electrons from NADH, via FMN and iron-sulfur (Fe-S) centers, to quinones in the respiratory chain. The immediate electron acceptor for the enzyme in this species is believed to be ubiquinone. Couples the redox reaction to proton translocation (for every two electrons transferred, four hydrogen ions are translocated across the cytoplasmic membrane), and thus conserves the redox energy in a proton gradient. This chain is NADH-quinone oxidoreductase subunit K, found in Wolinella succinogenes (strain ATCC 29543 / DSM 1740 / CCUG 13145 / JCM 31913 / LMG 7466 / NCTC 11488 / FDC 602W) (Vibrio succinogenes).